The chain runs to 237 residues: Putative N-acetylmuramoyl-L-alanine amidase (237 aa).

One can recognise a MurNAc-LAA domain in the interval isoleucine 7–lysine 225.

It belongs to the N-acetylmuramoyl-L-alanine amidase 3 family.

The protein localises to the secreted. The enzyme catalyses Hydrolyzes the link between N-acetylmuramoyl residues and L-amino acid residues in certain cell-wall glycopeptides.. Its function is as follows. Cell-wall hydrolase involved in septum cleavage during cell division. This Buchnera aphidicola subsp. Acyrthosiphon pisum (strain APS) (Acyrthosiphon pisum symbiotic bacterium) protein is Putative N-acetylmuramoyl-L-alanine amidase (amiB).